A 407-amino-acid polypeptide reads, in one-letter code: MGSKRRVILLPTLGVVVLAIAAAVLLHAGEAADVANGQFARASGTRFTVGGRPFYSNGFNAYWLMYMASDPGDRSKAAGVLQQAASLRATLVRTWAFSDGGYRPLQKSPGVYNEDMFMGLDFVIAEAKKRGLYLILSLVNNWDGFGGKKQYVQWARDQGHNLGSDDDFFRSDVTKQFYKNHAVLTRVNKITGVAYKDDPTIFAWELINEPRCQSDLSGKTLQAWVTEMAGYVKSVDPNHMVEIGLEGFYGESMHKNFNPGYTVGTDFIANNLVPAVDFATIHSYPDQWVSGASSDEQVAFMRKWMADHIRDSAAVLRKPLLVTEFGWSARSNGYTVAARDAYFRTVYDAVYASAREGGACAGGLFWQVMAPGMESWTDGYEVVLERSKSTADVVAHQCARIAGLSPA.

The signal sequence occupies residues 1 to 31 (MGSKRRVILLPTLGVVVLAIAAAVLLHAGEA). Residues tryptophan 95 and asparagine 208 each coordinate substrate. Glutamate 209 serves as the catalytic Proton donor. Tyrosine 284 contacts substrate. Catalysis depends on glutamate 324, which acts as the Nucleophile. A substrate-binding site is contributed by tryptophan 366.

It belongs to the glycosyl hydrolase 5 (cellulase A) family. Expression not detected.

It is found in the secreted. The enzyme catalyses Random hydrolysis of (1-&gt;4)-beta-D-mannosidic linkages in mannans, galactomannans and glucomannans.. The protein is Putative mannan endo-1,4-beta-mannosidase 9 (MAN9) of Oryza sativa subsp. japonica (Rice).